A 155-amino-acid chain; its full sequence is Ribosomal RNA large subunit methyltransferase H (155 aa).

S-adenosyl-L-methionine is bound by residues Gly104 and 123-128; that span reads LGPMTF.

Belongs to the RNA methyltransferase RlmH family. In terms of assembly, homodimer.

It is found in the cytoplasm. It catalyses the reaction pseudouridine(1915) in 23S rRNA + S-adenosyl-L-methionine = N(3)-methylpseudouridine(1915) in 23S rRNA + S-adenosyl-L-homocysteine + H(+). In terms of biological role, specifically methylates the pseudouridine at position 1915 (m3Psi1915) in 23S rRNA. The chain is Ribosomal RNA large subunit methyltransferase H from Nitratidesulfovibrio vulgaris (strain DSM 19637 / Miyazaki F) (Desulfovibrio vulgaris).